Here is a 283-residue protein sequence, read N- to C-terminus: Thymidylate synthase (283 aa).

Arg22 is a binding site for dUMP. Residue Cys160 is the Nucleophile of the active site. DUMP-binding positions include 180–183, Asn191, and 221–223; these read RSCD and HIY. Position 183 (Asp183) interacts with (6R)-5,10-methylene-5,6,7,8-tetrahydrofolate. Residue Ser282 participates in (6R)-5,10-methylene-5,6,7,8-tetrahydrofolate binding.

Belongs to the thymidylate synthase family. Bacterial-type ThyA subfamily. Homodimer.

Its subcellular location is the cytoplasm. It carries out the reaction dUMP + (6R)-5,10-methylene-5,6,7,8-tetrahydrofolate = 7,8-dihydrofolate + dTMP. It functions in the pathway pyrimidine metabolism; dTTP biosynthesis. Functionally, catalyzes the reductive methylation of 2'-deoxyuridine-5'-monophosphate (dUMP) to 2'-deoxythymidine-5'-monophosphate (dTMP) while utilizing 5,10-methylenetetrahydrofolate (mTHF) as the methyl donor and reductant in the reaction, yielding dihydrofolate (DHF) as a by-product. This enzymatic reaction provides an intracellular de novo source of dTMP, an essential precursor for DNA biosynthesis. The sequence is that of Thymidylate synthase from Haemophilus influenzae (strain ATCC 51907 / DSM 11121 / KW20 / Rd).